The chain runs to 145 residues: Basic phospholipase A2 Vb-2 (145 aa).

The signal sequence occupies residues 1–19; the sequence is MNPAHLLVLLAVCVSLLGA. A propeptide spanning residues 20 to 27 is cleaved from the precursor; sequence ANIPPQPL. Intrachain disulfides connect Cys-38–Cys-97, Cys-52–Cys-144, Cys-54–Cys-70, Cys-69–Cys-125, Cys-76–Cys-118, Cys-86–Cys-111, and Cys-104–Cys-116. Residues Tyr-53, Gly-55, and Gly-57 each coordinate Ca(2+). Residue His-73 is part of the active site. Asp-74 is a binding site for Ca(2+). Asp-119 is a catalytic residue.

Ca(2+) serves as cofactor. In terms of tissue distribution, expressed by the venom gland.

Its subcellular location is the secreted. The enzyme catalyses a 1,2-diacyl-sn-glycero-3-phosphocholine + H2O = a 1-acyl-sn-glycero-3-phosphocholine + a fatty acid + H(+). Its function is as follows. Snake venom phospholipase A2 (PLA2) that has only a weak enzymatic activity. Inhibits neuromuscular transmission by blocking acetylcholine release from the nerve termini. PLA2 catalyzes the calcium-dependent hydrolysis of the 2-acyl groups in 3-sn-phosphoglycerides. The polypeptide is Basic phospholipase A2 Vb-2 (Bungarus fasciatus (Banded krait)).